The following is a 260-amino-acid chain: Putative hydro-lyase Bmul_5125/BMULJ_03391 (260 aa).

Belongs to the D-glutamate cyclase family.

The polypeptide is Putative hydro-lyase Bmul_5125/BMULJ_03391 (Burkholderia multivorans (strain ATCC 17616 / 249)).